A 321-amino-acid polypeptide reads, in one-letter code: tRNA(Ile)-lysidine synthase (321 aa).

Position 21–26 (21–26) interacts with ATP; it reads SYGSDS.

This sequence belongs to the tRNA(Ile)-lysidine synthase family.

The protein localises to the cytoplasm. It catalyses the reaction cytidine(34) in tRNA(Ile2) + L-lysine + ATP = lysidine(34) in tRNA(Ile2) + AMP + diphosphate + H(+). Ligates lysine onto the cytidine present at position 34 of the AUA codon-specific tRNA(Ile) that contains the anticodon CAU, in an ATP-dependent manner. Cytidine is converted to lysidine, thus changing the amino acid specificity of the tRNA from methionine to isoleucine. The polypeptide is tRNA(Ile)-lysidine synthase (Campylobacter jejuni (strain RM1221)).